The primary structure comprises 582 residues: Beta-glucosidase 28 (582 aa).

A signal peptide spans 1-21 (MKMHFFILLVITSWLSEKITS). A beta-D-glucoside-binding positions include Gln-48, His-151, and 196-197 (NE). Glu-197 functions as the Proton donor in the catalytic mechanism. Cysteines 216 and 224 form a disulfide. Asn-255 and Asn-330 each carry an N-linked (GlcNAc...) asparagine glycan. Tyr-340 contributes to the a beta-D-glucoside binding site. Residue Asn-370 is glycosylated (N-linked (GlcNAc...) asparagine). An a beta-D-glucoside-binding site is contributed by Glu-412. Glu-412 functions as the Nucleophile in the catalytic mechanism. N-linked (GlcNAc...) asparagine glycosylation occurs at Asn-430. A beta-D-glucoside is bound by residues Trp-462, 469-470 (EW), and Phe-478. Asn-521 and Asn-544 each carry an N-linked (GlcNAc...) asparagine glycan.

This sequence belongs to the glycosyl hydrolase 1 family.

It catalyses the reaction Hydrolysis of terminal, non-reducing beta-D-glucosyl residues with release of beta-D-glucose.. The sequence is that of Beta-glucosidase 28 from Arabidopsis thaliana (Mouse-ear cress).